The chain runs to 70 residues: Guanine nucleotide-binding protein G(I)/G(S)/G(O) subunit gamma-8 (70 aa).

C67 is modified (cysteine methyl ester). C67 carries the S-geranylgeranyl cysteine lipid modification. Residues 68 to 70 (VLL) constitute a propeptide, removed in mature form.

Belongs to the G protein gamma family. In terms of assembly, g proteins are composed of 3 units, alpha, beta and gamma.

The protein localises to the cell membrane. Guanine nucleotide-binding proteins (G proteins) are involved as a modulator or transducer in various transmembrane signaling systems. The beta and gamma chains are required for the GTPase activity, for replacement of GDP by GTP, and for G protein-effector interaction. The protein is Guanine nucleotide-binding protein G(I)/G(S)/G(O) subunit gamma-8 (GNG8) of Homo sapiens (Human).